Consider the following 302-residue polypeptide: Aurora/IPL1-related protein kinase 2 (302 aa).

Residues 1–17 (MENKPQILQTKSKNTPN) are compositionally biased toward polar residues. Residues 1–23 (MENKPQILQTKSKNTPNKGGKLS) form a disordered region. The 251-residue stretch at 27–277 (FEIGRPLGKG…LQEVKDHYWV (251 aa)) folds into the Protein kinase domain. Residues 33–41 (LGKGKFGSV) and Lys-56 contribute to the ATP site. Asp-150 acts as the Proton acceptor in catalysis.

The protein belongs to the protein kinase superfamily. Ser/Thr protein kinase family. As to quaternary structure, interacts with zen-4 and icp-1. Part of a complex containing at least air-2; icp-1; csc-1 and bir-1. Interacts with tlk-1 and bmk-1.

The protein localises to the cytoplasm. It localises to the cytoskeleton. It is found in the chromosome. Its subcellular location is the midbody. It carries out the reaction L-seryl-[protein] + ATP = O-phospho-L-seryl-[protein] + ADP + H(+). The catalysed reaction is L-threonyl-[protein] + ATP = O-phospho-L-threonyl-[protein] + ADP + H(+). Functionally, serine/threonine-protein kinase which mediates both meiotic and mitotic chromosome segregation. Required for histone H3 'Ser-10' phosphorylation. Phosphorylates tlk-1 and zen-4. In Caenorhabditis briggsae, this protein is Aurora/IPL1-related protein kinase 2 (air-2).